Here is a 352-residue protein sequence, read N- to C-terminus: Selenide, water dikinase (352 aa).

The active site involves Cys23. Residues Lys26 and 54-56 contribute to the ATP site; that span reads SRD. Residue Asp57 participates in Mg(2+) binding. ATP-binding positions include Asp74, Asp97, and 145-147; that span reads GHS. Asp97 is a Mg(2+) binding site. Residue Asp233 coordinates Mg(2+).

The protein belongs to the selenophosphate synthase 1 family. Class I subfamily. Homodimer. The cofactor is Mg(2+).

The enzyme catalyses hydrogenselenide + ATP + H2O = selenophosphate + AMP + phosphate + 2 H(+). In terms of biological role, synthesizes selenophosphate from selenide and ATP. The polypeptide is Selenide, water dikinase (Shewanella sp. (strain ANA-3)).